We begin with the raw amino-acid sequence, 448 residues long: Endoglucanase (448 aa).

An N-terminal signal peptide occupies residues 1–34; sequence MFSKIKKINFFKKTFSFLIAVVMMLFTVLGTNTY. Residues H70, 74–75, Y101, and H137 each bind substrate; that span reads WY. E175 (proton donor) is an active-site residue. Residue Y237 coordinates substrate. E263 acts as the Nucleophile in catalysis. Residues 269–270, W297, and 302–304 each bind substrate; these read AS and KSE.

It belongs to the glycosyl hydrolase 5 (cellulase A) family.

It catalyses the reaction Endohydrolysis of (1-&gt;4)-beta-D-glucosidic linkages in cellulose, lichenin and cereal beta-D-glucans.. This Clostridium saccharobutylicum protein is Endoglucanase (eglA).